A 413-amino-acid polypeptide reads, in one-letter code: Aminopeptidase PepS (413 aa).

The a divalent metal cation site is built by E253, E319, E343, H348, H381, and D383.

It belongs to the peptidase M29 family. As to quaternary structure, monomer. It depends on Co(2+) as a cofactor. Requires Zn(2+) as cofactor. Mg(2+) is required as a cofactor.

In terms of biological role, exhibits a high specificity towards peptides possessing arginine or aromatic amino acids at the N-terminus. Could be involved both in bacterial growth by supplying amino acids. In Streptococcus thermophilus, this protein is Aminopeptidase PepS (pepS).